The chain runs to 591 residues: Myelin expression factor 2 (591 aa).

The interval 1–92 (MADADKSEAA…GEKKGPNRNR (92 aa)) is disordered. Basic and acidic residues predominate over residues 22–36 (EPRRDTHPGEPEKPP). Lys44 participates in a covalent cross-link: Glycyl lysine isopeptide (Lys-Gly) (interchain with G-Cter in SUMO2). Composition is skewed to basic and acidic residues over residues 45–63 (MEND…EKST) and 74–87 (YSKD…EKKG). 2 consecutive RRM domains span residues 91 to 169 (NRVF…EDPD) and 224 to 301 (STIF…MDDK). Arg397 and Arg417 each carry omega-N-methylarginine. A Phosphoserine modification is found at Ser422. The RRM 3 domain maps to 514 to 590 (NQIFVRNLPF…REIDVRLDRN (77 aa)).

In terms of assembly, monomer. As to expression, highly expressed in the brain.

It is found in the nucleus. Functionally, transcriptional repressor of the myelin basic protein gene (MBP). Binds to the proximal MB1 element 5'-TTGTCC-3' of the MBP promoter. Its binding to MB1 and function are inhibited by PURA. This Mus musculus (Mouse) protein is Myelin expression factor 2 (Myef2).